A 156-amino-acid polypeptide reads, in one-letter code: Ribosome-binding factor A (156 aa).

Over residues 125-138 (RVREGAKHAGDPDP) the composition is skewed to basic and acidic residues. A disordered region spans residues 125 to 156 (RVREGAKHAGDPDPYRVGGAEDTDGDTDGDER). Acidic residues predominate over residues 145-156 (EDTDGDTDGDER).

The protein belongs to the RbfA family. In terms of assembly, monomer. Binds 30S ribosomal subunits, but not 50S ribosomal subunits or 70S ribosomes.

The protein localises to the cytoplasm. One of several proteins that assist in the late maturation steps of the functional core of the 30S ribosomal subunit. Associates with free 30S ribosomal subunits (but not with 30S subunits that are part of 70S ribosomes or polysomes). Required for efficient processing of 16S rRNA. May interact with the 5'-terminal helix region of 16S rRNA. The sequence is that of Ribosome-binding factor A from Mycolicibacterium smegmatis (strain ATCC 700084 / mc(2)155) (Mycobacterium smegmatis).